The sequence spans 371 residues: Cytochrome b (371 aa).

The next 4 helical transmembrane spans lie at 25–45, 69–90, 105–125, and 170–190; these read FGSMLLTCSALQVMTGFSLSM, WVMQNLHAIGASMFFICIYMYI, WLSGTTLLIMLMATAFFGYVL, and FFALHFILPFGIISVSSIHIM. Position 75 (His-75) interacts with heme b. Residues His-174 and His-188 each coordinate heme b. His-193 is an a ubiquinone binding site. A run of 4 helical transmembrane segments spans residues 218–238, 280–300, 312–332, and 339–358; these read YKDILMISIMIITLLLTVSFF, LGGALALVMSIMILFTMPFTH, LMQFMFWTLVATFVIITWTAT, and FTTISQVASIIYFTFFMSNP.

It belongs to the cytochrome b family. The cytochrome bc1 complex contains 3 respiratory subunits (MT-CYB, CYC1 and UQCRFS1), 2 core proteins (UQCRC1 and UQCRC2) and probably 6 low-molecular weight proteins. It depends on heme b as a cofactor.

It is found in the mitochondrion inner membrane. In terms of biological role, component of the ubiquinol-cytochrome c reductase complex (complex III or cytochrome b-c1 complex) that is part of the mitochondrial respiratory chain. The b-c1 complex mediates electron transfer from ubiquinol to cytochrome c. Contributes to the generation of a proton gradient across the mitochondrial membrane that is then used for ATP synthesis. In Candoia aspera (New Guinea boa), this protein is Cytochrome b (MT-CYB).